Consider the following 283-residue polypeptide: Bifunctional protein FolD (283 aa).

Residues 163–165 (GRS), Ser-188, and Ile-229 contribute to the NADP(+) site.

Belongs to the tetrahydrofolate dehydrogenase/cyclohydrolase family. In terms of assembly, homodimer.

It carries out the reaction (6R)-5,10-methylene-5,6,7,8-tetrahydrofolate + NADP(+) = (6R)-5,10-methenyltetrahydrofolate + NADPH. The enzyme catalyses (6R)-5,10-methenyltetrahydrofolate + H2O = (6R)-10-formyltetrahydrofolate + H(+). It participates in one-carbon metabolism; tetrahydrofolate interconversion. Catalyzes the oxidation of 5,10-methylenetetrahydrofolate to 5,10-methenyltetrahydrofolate and then the hydrolysis of 5,10-methenyltetrahydrofolate to 10-formyltetrahydrofolate. This is Bifunctional protein FolD from Campylobacter concisus (strain 13826).